A 651-amino-acid polypeptide reads, in one-letter code: Nucleolin (651 aa).

A compositionally biased stretch (low complexity) spans 1 to 11 (MVKLAKGAKTQ). The tract at residues 1–230 (MVKLAKGAKT…AKKTKTDTAS (230 aa)) is disordered. The span at 26–45 (EDSEEEEDMEEDDSSDEEVE) shows a compositional bias: acidic residues. Low complexity predominate over residues 54-79 (KKTATPAKATPGKAATPGKKGATPAK). Acidic residues predominate over residues 89-101 (SEEEEDDSDEEAE). Residues 106–116 (IKNKPVAKKAV) are compositionally biased toward basic residues. Composition is skewed to acidic residues over residues 122-134 (SEED…ESEE), 155-168 (SEEE…DEPM), and 183-204 (AEED…EEEQ). Ser155 carries the phosphoserine modification. Basic and acidic residues predominate over residues 219-228 (PEAKKTKTDT). RRM domains are found at residues 233 to 309 (LSIF…KAMA), 325 to 399 (RTLF…FTGE), 415 to 488 (KVLV…FSQG), and 503 to 578 (KTLF…FAKP). Positions 574–651 (DFAKPKGDSQ…GQGKKMRFDD (78 aa)) are disordered. Residues 585 to 644 (GGRGGFGRGGGFRGGRGGRGGGGGRGFGGRGGGRGRGGFGGRGGGGFRGGQGGGFRGGQG) are compositionally biased toward gly residues.

Its subcellular location is the nucleus. The protein localises to the nucleolus. Functionally, nucleolin is the major nucleolar protein of growing eukaryotic cells. It is found associated with intranucleolar chromatin and pre-ribosomal particles. It induces chromatin decondensation by binding to histone H1. It is thought to play a role in pre-rRNA transcription and ribosome assembly. The protein is Nucleolin (ncl) of Xenopus laevis (African clawed frog).